Consider the following 114-residue polypeptide: Fluoride-specific ion channel FluC 2 (114 aa).

Helical transmembrane passes span 3-23, 31-51, 57-77, and 92-112; these read YVIIGGAVGACLRFAVSECWL, LMTAVFVINISGCAMLGWILA, GIELLFISMLGGFTTFSTFCM, and MIYLVISIVGSLFGFLFGWNV. 2 residues coordinate Na(+): G67 and T70.

It belongs to the fluoride channel Fluc/FEX (TC 1.A.43) family.

Its subcellular location is the cell membrane. It carries out the reaction fluoride(in) = fluoride(out). With respect to regulation, na(+) is not transported, but it plays an essential structural role and its presence is essential for fluoride channel function. In terms of biological role, fluoride-specific ion channel. Important for reducing fluoride concentration in the cell, thus reducing its toxicity. This is Fluoride-specific ion channel FluC 2 from Shouchella clausii (strain KSM-K16) (Alkalihalobacillus clausii).